Reading from the N-terminus, the 562-residue chain is Potassium-transporting ATPase potassium-binding subunit (562 aa).

12 helical membrane passes run 5 to 25 (GILA…PLGG), 65 to 85 (AYLR…YAVF), 135 to 155 (IGIT…AMAF), 181 to 201 (LLLP…VPET), 257 to 277 (ILEI…AGHF), 283 to 303 (LAIV…YIVY), 331 to 351 (FGLP…TGAV), 358 to 378 (LMPL…IFGG), 381 to 401 (VGLL…GLMV), 422 to 442 (AAML…MALP), 486 to 506 (ISIG…MLAI), and 528 to 548 (FAFG…TFFP).

The protein belongs to the KdpA family. In terms of assembly, the system is composed of three essential subunits: KdpA, KdpB and KdpC.

Its subcellular location is the cell membrane. Its function is as follows. Part of the high-affinity ATP-driven potassium transport (or Kdp) system, which catalyzes the hydrolysis of ATP coupled with the electrogenic transport of potassium into the cytoplasm. This subunit binds the extracellular potassium ions and delivers the ions to the membrane domain of KdpB through an intramembrane tunnel. In Alicyclobacillus acidocaldarius subsp. acidocaldarius (strain ATCC 27009 / DSM 446 / BCRC 14685 / JCM 5260 / KCTC 1825 / NBRC 15652 / NCIMB 11725 / NRRL B-14509 / 104-IA) (Bacillus acidocaldarius), this protein is Potassium-transporting ATPase potassium-binding subunit.